Consider the following 876-residue polypeptide: Probable DNA-directed RNA polymerase catalytic subunit (876 aa).

The protein belongs to the RNA polymerase beta chain family. As to quaternary structure, interacts with LEF-4, LEF-9, and p47.

It carries out the reaction RNA(n) + a ribonucleoside 5'-triphosphate = RNA(n+1) + diphosphate. Its function is as follows. Component of the viral DNA-dependent RNA polymerase which is composed of four equimolar subunits of LEF-4, LEF-8, LEF-9, and p47. Plays an essential role in late and very late gene expression. The protein is Probable DNA-directed RNA polymerase catalytic subunit (LEF-8) of Autographa californica nuclear polyhedrosis virus (AcMNPV).